A 159-amino-acid polypeptide reads, in one-letter code: Small ribosomal subunit protein uS15 (159 aa).

Residues 1 to 16 (MNKRKEKGKSHSKRPV) are compositionally biased toward basic residues. The tract at residues 1 to 22 (MNKRKEKGKSHSKRPVRNTPPR) is disordered.

It belongs to the universal ribosomal protein uS15 family. As to quaternary structure, part of the 30S ribosomal subunit.

The protein is Small ribosomal subunit protein uS15 of Ignicoccus hospitalis (strain KIN4/I / DSM 18386 / JCM 14125).